Here is a 398-residue protein sequence, read N- to C-terminus: MVILSHHKRSPPLLMRLFRICRFFRRLMSSSTSSVESVEDESCSNECSASFTFDTNNNSRGNNQVNELAEETHMKLSITPTRESFSLSQLERIITIGKGTFGRVELARDKITGAHYALKVLNIRRVVDMRQTQHVHNEKRVLLQLKHPFIVKMYASEKDSNHLYMIMEFVPGGEMFSYLRASRSFSNSMARFYASEIVCALEYIHSLGIVYRDLKPENLMLSKEGHIKMADFGFAKELRDRTYTICGTPDYLAPESLARTGHNKGVDWWALGILIYEMMVGKPPFRGKTTSEIYDAIIEHKLKFPRSFNLAAKDLVKKLLEVDRTQRIGCMKNGTQDVKDHKWFEKVNWDDTLHLRVEPPIVPTLYHPGDTGNFDDYEEDTTGGPLCSQRDRDLFAEW.

Positions 90–344 constitute a Protein kinase domain; that stretch reads LERIITIGKG…TQDVKDHKWF (255 aa). Residues 96–104 and Lys119 each bind ATP; that span reads IGKGTFGRV. Asp213 functions as the Proton acceptor in the catalytic mechanism. The 54-residue stretch at 345–398 folds into the AGC-kinase C-terminal domain; it reads EKVNWDDTLHLRVEPPIVPTLYHPGDTGNFDDYEEDTTGGPLCSQRDRDLFAEW.

This sequence belongs to the protein kinase superfamily. Ser/Thr protein kinase family. cAMP subfamily.

The enzyme catalyses L-seryl-[protein] + ATP = O-phospho-L-seryl-[protein] + ADP + H(+). It catalyses the reaction L-threonyl-[protein] + ATP = O-phospho-L-threonyl-[protein] + ADP + H(+). This is cAMP-dependent protein kinase, catalytic subunit-like from Caenorhabditis elegans.